The primary structure comprises 243 residues: Orotidine 5'-phosphate decarboxylase (243 aa).

Residues Asp19, Lys41, Asp69–Thr78, Thr124, Arg185, Gln194, Gly214, and Arg215 contribute to the substrate site. Lys71 acts as the Proton donor in catalysis.

This sequence belongs to the OMP decarboxylase family. Type 1 subfamily. Homodimer.

The enzyme catalyses orotidine 5'-phosphate + H(+) = UMP + CO2. It functions in the pathway pyrimidine metabolism; UMP biosynthesis via de novo pathway; UMP from orotate: step 2/2. Catalyzes the decarboxylation of orotidine 5'-monophosphate (OMP) to uridine 5'-monophosphate (UMP). This Xanthomonas euvesicatoria pv. vesicatoria (strain 85-10) (Xanthomonas campestris pv. vesicatoria) protein is Orotidine 5'-phosphate decarboxylase.